The chain runs to 703 residues: Polyribonucleotide nucleotidyltransferase (703 aa).

2 residues coordinate Mg(2+): D484 and D490. Positions 551–610 (PTVTTLRVLPEKISVIIGPAGKNIKKIIEETGVKIDLDPTGLVKIYATSKIAAEKAIDMI) constitute a KH domain. The S1 motif domain occupies 620 to 688 (GEVYLGKVTR…DQGRIKVSLK (69 aa)).

It belongs to the polyribonucleotide nucleotidyltransferase family. The cofactor is Mg(2+).

Its subcellular location is the cytoplasm. It carries out the reaction RNA(n+1) + phosphate = RNA(n) + a ribonucleoside 5'-diphosphate. In terms of biological role, involved in mRNA degradation. Catalyzes the phosphorolysis of single-stranded polyribonucleotides processively in the 3'- to 5'-direction. This is Polyribonucleotide nucleotidyltransferase from Sulfurihydrogenibium sp. (strain YO3AOP1).